The primary structure comprises 135 residues: MLSPKRTRFRKQHRGRMKGISYRGNAICFGKYALQALEPAWITSRQIEAGRRAMTRNARRGGKIWVRIFPDKPVTVRPAETRMGSGKGSPEYWVAVVKPGRILYEMGGVTENIARRAISIAASKMPIRAQFIISG.

Belongs to the universal ribosomal protein uL16 family. In terms of assembly, part of the 50S ribosomal subunit.

It is found in the plastid. Its subcellular location is the chloroplast. This chain is Large ribosomal subunit protein uL16c, found in Lactuca sativa (Garden lettuce).